A 464-amino-acid chain; its full sequence is Fumarate hydratase class II (464 aa).

Residues 100–102, 131–134, 141–143, and Thr189 each bind substrate; these read SGT, HPND, and SSN. The Proton donor/acceptor role is filled by His190. Residue Ser320 is part of the active site. Substrate is bound by residues Ser321 and 326-328; that span reads KVN.

This sequence belongs to the class-II fumarase/aspartase family. Fumarase subfamily. Homotetramer.

It is found in the cytoplasm. It catalyses the reaction (S)-malate = fumarate + H2O. The protein operates within carbohydrate metabolism; tricarboxylic acid cycle; (S)-malate from fumarate: step 1/1. Involved in the TCA cycle. Catalyzes the stereospecific interconversion of fumarate to L-malate. The chain is Fumarate hydratase class II from Deinococcus radiodurans (strain ATCC 13939 / DSM 20539 / JCM 16871 / CCUG 27074 / LMG 4051 / NBRC 15346 / NCIMB 9279 / VKM B-1422 / R1).